The following is a 292-amino-acid chain: Forkhead box protein R1 (292 aa).

2 disordered regions span residues 31–50 (PPKL…PDYE) and 65–166 (PGKL…ASSQ). 2 stretches are compositionally biased toward basic and acidic residues: residues 35–47 (PLEK…KDGP) and 70–79 (VSGRRKREDL). The span at 80-89 (TSTLPSSQPP) shows a compositional bias: polar residues. Residues 129–140 (LTEEEEAEDQED) show a composition bias toward acidic residues. Over residues 149 to 161 (PHKRAPLQSRRLR) the composition is skewed to basic residues. The fork-head DNA-binding region spans 173–272 (RPPLNYFHLI…EEARALASTR (100 aa)).

As to expression, expressed in testis (at protein level).

The protein resides in the nucleus. It is found in the cytoplasm. It localises to the perinuclear region. Transcription factor which acts as both an activator and a repressor. Activates transcription of a number of genes including the heat shock chaperones HSPA1A and HSPA6 and the antioxidant NADPH-dependent reductase DHRS2 which are involved in protection against oxidative stress. Required for normal brain development. This is Forkhead box protein R1 (FOXR1) from Homo sapiens (Human).